The chain runs to 723 residues: F-box protein MAX2 homolog B (723 aa).

An F-box domain is found at 2–55 (AKTPIPFTTLNDLPDVILSNIIAAVSDTRSRNATALVCHKWLVLERSTRTSLTL).

In terms of assembly, part of a putative SCF (SKP1/Cullin/F-box) ubiquitin ligase complex. Interacts with KAI2IA in the presence of (-)-germacrene D. In terms of tissue distribution, mainly expressed in fully expanded leaves, lateral roots, axillary and shoot apex, and, to a lower extent, in internodes and nodes.

The protein localises to the nucleus. It is found in the cytoplasm. Its function is as follows. Component of SCF(ASK-cullin-F-box) E3 ubiquitin ligase complexes, which may mediate the ubiquitination and subsequent proteasomal degradation of target proteins. Is necessary for responses to strigolactones and may be involved in the ubiquitin-mediated degradation of specific proteins that activate axillary growth. Targets probably SMAX1A to degradation upon the formation of an E3 SCF ubiquitin ligase complex (ASK-cullin-F-box) containing MAX2B and KAI2IA in response to (-)-germacrene D in the stigma. The sequence is that of F-box protein MAX2 homolog B from Petunia hybrida (Petunia).